The sequence spans 427 residues: 3-phosphoshikimate 1-carboxyvinyltransferase (427 aa).

The 3-phosphoshikimate site is built by Lys22, Ser23, and Arg27. Phosphoenolpyruvate is bound at residue Lys22. 2 residues coordinate phosphoenolpyruvate: Gly96 and Arg124. Residues Ser169, Ser170, Gln171, Ser197, Asp313, Asn336, and Lys340 each coordinate 3-phosphoshikimate. Gln171 is a phosphoenolpyruvate binding site. The active-site Proton acceptor is the Asp313. The phosphoenolpyruvate site is built by Arg344, Arg386, and Lys411.

The protein belongs to the EPSP synthase family. Monomer.

The protein localises to the cytoplasm. The enzyme catalyses 3-phosphoshikimate + phosphoenolpyruvate = 5-O-(1-carboxyvinyl)-3-phosphoshikimate + phosphate. It participates in metabolic intermediate biosynthesis; chorismate biosynthesis; chorismate from D-erythrose 4-phosphate and phosphoenolpyruvate: step 6/7. Functionally, catalyzes the transfer of the enolpyruvyl moiety of phosphoenolpyruvate (PEP) to the 5-hydroxyl of shikimate-3-phosphate (S3P) to produce enolpyruvyl shikimate-3-phosphate and inorganic phosphate. This is 3-phosphoshikimate 1-carboxyvinyltransferase from Salmonella paratyphi A (strain ATCC 9150 / SARB42).